The following is a 93-amino-acid chain: RNA-binding protein Hfq (93 aa).

The Sm domain occupies 9-68 (DPYLNALRRERIPVSIYLVNGIKLQGQIESFDQFVILLKNTVSQMVYKHAISTVVPARAI). Residues 70 to 81 (HNNNSNHAHQAA) are compositionally biased toward low complexity. A disordered region spans residues 70 to 93 (HNNNSNHAHQAAPVQSAEVVEKVE).

Belongs to the Hfq family. Homohexamer.

RNA chaperone that binds small regulatory RNA (sRNAs) and mRNAs to facilitate mRNA translational regulation in response to envelope stress, environmental stress and changes in metabolite concentrations. Also binds with high specificity to tRNAs. This Glaesserella parasuis serovar 5 (strain SH0165) (Haemophilus parasuis) protein is RNA-binding protein Hfq.